The chain runs to 510 residues: Glycerol kinase (510 aa).

Residue Thr-14 coordinates ADP. 2 residues coordinate ATP: Thr-14 and Thr-15. Thr-14 is a sn-glycerol 3-phosphate binding site. Position 18 (Arg-18) interacts with ADP. The sn-glycerol 3-phosphate site is built by Arg-84, Glu-85, Tyr-136, and Asp-256. Residues Arg-84, Glu-85, Tyr-136, Asp-256, and Gln-257 each coordinate glycerol. ADP is bound by residues Thr-278, Gly-322, Gly-422, and Asn-426. Thr-278, Gly-322, and Gly-422 together coordinate ATP.

It belongs to the FGGY kinase family.

It carries out the reaction glycerol + ATP = sn-glycerol 3-phosphate + ADP + H(+). The protein operates within polyol metabolism; glycerol degradation via glycerol kinase pathway; sn-glycerol 3-phosphate from glycerol: step 1/1. Its function is as follows. Key enzyme in the regulation of glycerol uptake and metabolism. Catalyzes the phosphorylation of glycerol to yield sn-glycerol 3-phosphate. It also catalyzes the phosphorylation of dihydroxyacetone (DHA). Involved, together with the DHA kinase DhaKLM, in the metabolism of DHA. This Haloferax volcanii (strain ATCC 29605 / DSM 3757 / JCM 8879 / NBRC 14742 / NCIMB 2012 / VKM B-1768 / DS2) (Halobacterium volcanii) protein is Glycerol kinase.